The primary structure comprises 322 residues: 4-hydroxy-3-methylbut-2-enyl diphosphate reductase (322 aa).

C15 contacts [4Fe-4S] cluster. Positions 44 and 77 each coordinate (2E)-4-hydroxy-3-methylbut-2-enyl diphosphate. Dimethylallyl diphosphate-binding residues include H44 and H77. 2 residues coordinate isopentenyl diphosphate: H44 and H77. C99 serves as a coordination point for [4Fe-4S] cluster. H127 lines the (2E)-4-hydroxy-3-methylbut-2-enyl diphosphate pocket. H127 provides a ligand contact to dimethylallyl diphosphate. Residue H127 participates in isopentenyl diphosphate binding. E129 functions as the Proton donor in the catalytic mechanism. Residue T168 coordinates (2E)-4-hydroxy-3-methylbut-2-enyl diphosphate. A [4Fe-4S] cluster-binding site is contributed by C198. The (2E)-4-hydroxy-3-methylbut-2-enyl diphosphate site is built by S226, S227, N228, and S270. 4 residues coordinate dimethylallyl diphosphate: S226, S227, N228, and S270. Residues S226, S227, N228, and S270 each contribute to the isopentenyl diphosphate site.

The protein belongs to the IspH family. The cofactor is [4Fe-4S] cluster.

It catalyses the reaction isopentenyl diphosphate + 2 oxidized [2Fe-2S]-[ferredoxin] + H2O = (2E)-4-hydroxy-3-methylbut-2-enyl diphosphate + 2 reduced [2Fe-2S]-[ferredoxin] + 2 H(+). It carries out the reaction dimethylallyl diphosphate + 2 oxidized [2Fe-2S]-[ferredoxin] + H2O = (2E)-4-hydroxy-3-methylbut-2-enyl diphosphate + 2 reduced [2Fe-2S]-[ferredoxin] + 2 H(+). Its pathway is isoprenoid biosynthesis; dimethylallyl diphosphate biosynthesis; dimethylallyl diphosphate from (2E)-4-hydroxy-3-methylbutenyl diphosphate: step 1/1. It functions in the pathway isoprenoid biosynthesis; isopentenyl diphosphate biosynthesis via DXP pathway; isopentenyl diphosphate from 1-deoxy-D-xylulose 5-phosphate: step 6/6. Catalyzes the conversion of 1-hydroxy-2-methyl-2-(E)-butenyl 4-diphosphate (HMBPP) into a mixture of isopentenyl diphosphate (IPP) and dimethylallyl diphosphate (DMAPP). Acts in the terminal step of the DOXP/MEP pathway for isoprenoid precursor biosynthesis. The protein is 4-hydroxy-3-methylbut-2-enyl diphosphate reductase of Neisseria meningitidis serogroup A / serotype 4A (strain DSM 15465 / Z2491).